We begin with the raw amino-acid sequence, 221 residues long: Zingipain-1 (221 aa).

Intrachain disulfides connect C24-C65, C58-C98, and C155-C206. Residue C27 is part of the active site. N95 and N156 each carry an N-linked (GlcNAc...) asparagine glycan. Residues H161 and N181 contribute to the active site.

This sequence belongs to the peptidase C1 family.

It catalyses the reaction Preferential cleavage of peptides with a proline residue at the P2 position.. Cysteine proteinase with a high level of diversity in substrate specificity, an amino acid bearing a proline residue at the P2 position is preferred. The polypeptide is Zingipain-1 (Zingiber officinale (Ginger)).